The following is a 332-amino-acid chain: Ribosomal RNA small subunit methyltransferase C (332 aa).

It belongs to the methyltransferase superfamily. RsmC family. In terms of assembly, monomer.

It localises to the cytoplasm. The enzyme catalyses guanosine(1207) in 16S rRNA + S-adenosyl-L-methionine = N(2)-methylguanosine(1207) in 16S rRNA + S-adenosyl-L-homocysteine + H(+). Its function is as follows. Specifically methylates the guanine in position 1207 of 16S rRNA in the 30S particle. The protein is Ribosomal RNA small subunit methyltransferase C of Pseudomonas syringae pv. syringae (strain B728a).